Reading from the N-terminus, the 906-residue chain is Catenin alpha-2 (906 aa).

Residues 866–880 (KKPLVKREKPEEYQT) are compositionally biased toward basic and acidic residues. The interval 866-892 (KKPLVKREKPEEYQTRVRRGSQKKHIS) is disordered. Positions 881 to 891 (RVRRGSQKKHI) are enriched in basic residues.

It belongs to the vinculin/alpha-catenin family. Interacts with CDH1 and CDH2. Mainly in the nervous system (at protein level).

It is found in the cell membrane. It localises to the cytoplasm. The protein resides in the cytoskeleton. Its subcellular location is the cell junction. The protein localises to the adherens junction. It is found in the cell projection. It localises to the axon. The protein resides in the nucleus. Functionally, may function as a linker between cadherin adhesion receptors and the cytoskeleton to regulate cell-cell adhesion and differentiation in the nervous system. This Gallus gallus (Chicken) protein is Catenin alpha-2 (CTNNA2).